The chain runs to 249 residues: uncharacterized protein (249 aa).

Residue 11–34 (IFGGRSQIGGELARRLAAGATMVL) participates in NADP(+) binding. Position 142 (serine 142) interacts with substrate. The active-site Proton acceptor is tyrosine 155.

Belongs to the short-chain dehydrogenases/reductases (SDR) family.

This is an uncharacterized protein from Mycobacterium tuberculosis (strain CDC 1551 / Oshkosh).